Here is a 469-residue protein sequence, read N- to C-terminus: Ribulose bisphosphate carboxylase large chain (469 aa).

An N6,N6,N6-trimethyllysine modification is found at lysine 5. Substrate contacts are provided by asparagine 114 and threonine 164. Lysine 166 acts as the Proton acceptor in catalysis. A substrate-binding site is contributed by lysine 168. Residues lysine 192, aspartate 194, and glutamate 195 each contribute to the Mg(2+) site. Position 192 is an N6-carboxylysine (lysine 192). Histidine 285 serves as the catalytic Proton acceptor. Arginine 286, histidine 318, and serine 370 together coordinate substrate.

This sequence belongs to the RuBisCO large chain family. Type I subfamily. In terms of assembly, heterohexadecamer of 8 large chains and 8 small chains; disulfide-linked. The disulfide link is formed within the large subunit homodimers. Requires Mg(2+) as cofactor. Post-translationally, the disulfide bond which can form in the large chain dimeric partners within the hexadecamer appears to be associated with oxidative stress and protein turnover.

The protein localises to the plastid. It localises to the chloroplast. The enzyme catalyses 2 (2R)-3-phosphoglycerate + 2 H(+) = D-ribulose 1,5-bisphosphate + CO2 + H2O. It catalyses the reaction D-ribulose 1,5-bisphosphate + O2 = 2-phosphoglycolate + (2R)-3-phosphoglycerate + 2 H(+). In terms of biological role, ruBisCO catalyzes two reactions: the carboxylation of D-ribulose 1,5-bisphosphate, the primary event in carbon dioxide fixation, as well as the oxidative fragmentation of the pentose substrate in the photorespiration process. Both reactions occur simultaneously and in competition at the same active site. In Fleroya rubrostipulata (Mitragyna rubrostipulata), this protein is Ribulose bisphosphate carboxylase large chain.